Here is a 95-residue protein sequence, read N- to C-terminus: MNQNPLTSEQLNNAYFNLLTPQQKQMVADFGKNMYSDFTKYEAPKTTTSTPLNDEEEIEWLVRQIMSGLQLCDINAKGKKLLQKKYGKTWKSKLF.

This is an uncharacterized protein from Acheta domesticus (House cricket).